A 98-amino-acid polypeptide reads, in one-letter code: DNA-directed RNA polymerase subunit Rpo11 (98 aa).

Belongs to the archaeal Rpo11/eukaryotic RPB11/RPC19 RNA polymerase subunit family. In terms of assembly, part of the RNA polymerase complex.

It localises to the cytoplasm. It carries out the reaction RNA(n) + a ribonucleoside 5'-triphosphate = RNA(n+1) + diphosphate. DNA-dependent RNA polymerase (RNAP) catalyzes the transcription of DNA into RNA using the four ribonucleoside triphosphates as substrates. The chain is DNA-directed RNA polymerase subunit Rpo11 from Korarchaeum cryptofilum (strain OPF8).